Reading from the N-terminus, the 323-residue chain is E3 ubiquitin-protein ligase makorin (323 aa).

2 C3H1-type zinc fingers span residues 1 to 28 (MSDR…HDSK) and 29 to 56 (DPPN…HVRA). Over residues 62 to 74 (LSSDSESLDRSIS) the composition is skewed to low complexity. A disordered region spans residues 62-92 (LSSDSESLDRSISTTPSRHLQQQGDNNDGDK). Residues 75-87 (TTPSRHLQQQGDN) show a composition bias toward polar residues. Residues 101–128 (PREYPICSFAAAGDCPRGNQCPHMHGDL) form a C3H1-type 3 zinc finger. Residues 129-158 (CNTCGKKCLHPFRPEEREEHTKECEKKQKH) form a makorin-type Cys-His region. The RING-type zinc finger occupies 170–228 (CSVCLDRILSKATPGERKFGLLTECDHPFCIQCIRNWRSSAPVSGMDVNSTLRACPICR). A C3H1-type 4 zinc finger spans residues 257–286 (KLRSIDCKHFNFGNGNCPFGASCFYKHAYS).

The enzyme catalyses S-ubiquitinyl-[E2 ubiquitin-conjugating enzyme]-L-cysteine + [acceptor protein]-L-lysine = [E2 ubiquitin-conjugating enzyme]-L-cysteine + N(6)-ubiquitinyl-[acceptor protein]-L-lysine.. It participates in protein modification; protein ubiquitination. In terms of biological role, E3 ubiquitin ligase catalyzing the covalent attachment of ubiquitin moieties onto substrate proteins. The protein is E3 ubiquitin-protein ligase makorin (MKRN) of Arabidopsis thaliana (Mouse-ear cress).